The following is a 261-amino-acid chain: Ribosomal RNA small subunit methyltransferase J (261 aa).

S-adenosyl-L-methionine contacts are provided by residues 109–110 (RD), 125–126 (ER), and aspartate 179.

This sequence belongs to the methyltransferase superfamily. RsmJ family.

It localises to the cytoplasm. The enzyme catalyses guanosine(1516) in 16S rRNA + S-adenosyl-L-methionine = N(2)-methylguanosine(1516) in 16S rRNA + S-adenosyl-L-homocysteine + H(+). Functionally, specifically methylates the guanosine in position 1516 of 16S rRNA. This Pseudomonas aeruginosa (strain ATCC 15692 / DSM 22644 / CIP 104116 / JCM 14847 / LMG 12228 / 1C / PRS 101 / PAO1) protein is Ribosomal RNA small subunit methyltransferase J.